A 444-amino-acid chain; its full sequence is Trigger factor (444 aa).

Positions 165-250 (GDFAKFDFEG…LHEIQELKIP (86 aa)) constitute a PPIase FKBP-type domain.

Belongs to the FKBP-type PPIase family. Tig subfamily.

Its subcellular location is the cytoplasm. The catalysed reaction is [protein]-peptidylproline (omega=180) = [protein]-peptidylproline (omega=0). In terms of biological role, involved in protein export. Acts as a chaperone by maintaining the newly synthesized protein in an open conformation. Functions as a peptidyl-prolyl cis-trans isomerase. In Campylobacter jejuni subsp. jejuni serotype O:2 (strain ATCC 700819 / NCTC 11168), this protein is Trigger factor (tig).